Here is a 348-residue protein sequence, read N- to C-terminus: Protein RecA (348 aa).

An ATP-binding site is contributed by 64–71; that stretch reads GPESSGKT.

This sequence belongs to the RecA family.

The protein localises to the cytoplasm. Functionally, can catalyze the hydrolysis of ATP in the presence of single-stranded DNA, the ATP-dependent uptake of single-stranded DNA by duplex DNA, and the ATP-dependent hybridization of homologous single-stranded DNAs. It interacts with LexA causing its activation and leading to its autocatalytic cleavage. This is Protein RecA from Blastochloris viridis (Rhodopseudomonas viridis).